Here is a 329-residue protein sequence, read N- to C-terminus: uncharacterized protein (329 aa).

Residues 38–184 form the SIS domain; sequence IVKLILKSQE…MACLMRAKNF (147 aa). Position 56–61 (56–61) interacts with ATP; the sequence is GVGKSA. 2 CBS domains span residues 211 to 267 and 276 to 329; these read QTTN…GLSL and TLKP…GLKA.

The protein belongs to the SIS family. GutQ/KpsF subfamily.

This is an uncharacterized protein from Helicobacter pylori (strain J99 / ATCC 700824) (Campylobacter pylori J99).